Here is a 271-residue protein sequence, read N- to C-terminus: 3-methyl-2-oxobutanoate hydroxymethyltransferase 1 (271 aa).

Positions 53 and 92 each coordinate Mg(2+). Residues D53–S54, D92, and K120 contribute to the 3-methyl-2-oxobutanoate site. E122 serves as a coordination point for Mg(2+). E189 functions as the Proton acceptor in the catalytic mechanism.

The protein belongs to the PanB family. As to quaternary structure, homodecamer; pentamer of dimers. Requires Mg(2+) as cofactor.

It localises to the cytoplasm. The catalysed reaction is 3-methyl-2-oxobutanoate + (6R)-5,10-methylene-5,6,7,8-tetrahydrofolate + H2O = 2-dehydropantoate + (6S)-5,6,7,8-tetrahydrofolate. The protein operates within cofactor biosynthesis; (R)-pantothenate biosynthesis; (R)-pantoate from 3-methyl-2-oxobutanoate: step 1/2. Catalyzes the reversible reaction in which hydroxymethyl group from 5,10-methylenetetrahydrofolate is transferred onto alpha-ketoisovalerate to form ketopantoate. This is 3-methyl-2-oxobutanoate hydroxymethyltransferase 1 from Burkholderia ambifaria (strain ATCC BAA-244 / DSM 16087 / CCUG 44356 / LMG 19182 / AMMD) (Burkholderia cepacia (strain AMMD)).